A 525-amino-acid chain; its full sequence is GMP synthase [glutamine-hydrolyzing] (525 aa).

The 199-residue stretch at R9–L207 folds into the Glutamine amidotransferase type-1 domain. C86 acts as the Nucleophile in catalysis. Catalysis depends on residues H181 and E183. The GMPS ATP-PPase domain maps to W208–R400. S235–S241 serves as a coordination point for ATP.

Homodimer.

It carries out the reaction XMP + L-glutamine + ATP + H2O = GMP + L-glutamate + AMP + diphosphate + 2 H(+). It functions in the pathway purine metabolism; GMP biosynthesis; GMP from XMP (L-Gln route): step 1/1. Catalyzes the synthesis of GMP from XMP. In Shigella dysenteriae serotype 1 (strain Sd197), this protein is GMP synthase [glutamine-hydrolyzing].